Reading from the N-terminus, the 1497-residue chain is Collagen alpha-1(XVII) chain (1497 aa).

2 disordered regions span residues 1-154 (MDVT…PSTR) and 167-186 (GSRS…LPIP). Residues 1 to 467 (MDVTKKNKRD…CGSCCSWWKW (467 aa)) are Cytoplasmic-facing. The tract at residues 1–566 (MDVTKKNKRD…MMEQENGNLR (566 aa)) is nonhelical region (NC16). Residues 9-19 (RDGTEVTERIV) are compositionally biased toward basic and acidic residues. 2 stretches are compositionally biased toward polar residues: residues 57–96 (LTHG…SPGS) and 169–183 (RSAS…SNTL). A necessary for interaction with DST and for the recruitment of DST to hemidesmosome region spans residues 145–230 (RLQSASPSTR…WSSTLPAGSS (86 aa)). The chain crosses the membrane as a helical; Signal-anchor for type II membrane protein span at residues 468-488 (LLGLLLTWLLLLGLLFGLIAL). The Extracellular segment spans residues 489–1497 (AEEVRKLKAR…RRRRSIAVKP (1009 aa)). The residue at position 544 (Ser-544) is a Phosphoserine; by CK2. 3 disordered regions span residues 562–1011 (NGNL…SSSG), 1209–1234 (GLSF…VSGA), and 1261–1316 (SFIV…TGGG). The interval 567–1482 (GSPGPKGDMG…KGEKGDKGDQ (916 aa)) is triple-helical region. Residues 590-602 (PGIPGPLGHPGPQ) show a composition bias toward pro residues. Composition is skewed to low complexity over residues 604-635 (PKGQ…RGEA), 661-673 (PGSV…SGSP), 735-748 (EPGA…AGPD), and 774-796 (DPGK…PGRP). Composition is skewed to pro residues over residues 820–841 (PGPP…PGPA), 858–881 (PPGP…PRGP), and 907–916 (PPGPPGPPGP). Low complexity-rich tracts occupy residues 936-946 (GFSTSGSSSFG) and 968-987 (PGVP…GSSS). Composition is skewed to pro residues over residues 994–1004 (PPGPPGPPGPP), 1214–1228 (PGPP…PRGP), and 1266–1275 (PPGPPGPQGP). Residues 1289 to 1312 (SRGSSSSSHSSSVRRGSSYSSSMS) are compositionally biased toward low complexity. N-linked (GlcNAc...) asparagine glycosylation occurs at Asn-1421. A disordered region spans residues 1434 to 1497 (GAIQGPPGQK…RRRRSIAVKP (64 aa)). Residues 1458–1469 (AGPPGHPGPPGP) show a composition bias toward pro residues. Over residues 1472–1481 (HKGEKGDKGD) the composition is skewed to basic and acidic residues. The nonhelical region (NC1) stretch occupies residues 1483–1497 (VYAGRRRRRSIAVKP). Residues 1486-1497 (GRRRRRSIAVKP) show a composition bias toward basic residues.

Homotrimers of alpha 1(XVII)chains. Interacts (via cytoplasmic region) with ITGB4 (via cytoplasmic region). Interacts (via cytoplasmic region) with DST isoform 3 (via N-terminus). Interacts (via N-terminus) with PLEC. Interacts (via cytoplasmic region) with DSP. In terms of processing, the intracellular/endo domain is disulfide-linked. Post-translationally, prolines at the third position of the tripeptide repeating unit (G-X-Y) are hydroxylated in some or all of the chains. The ectodomain is shedded from the surface of keratinocytes resulting in a 120-kDa soluble form, also named as 120 kDa linear IgA disease antigen. The shedding is mediated by membrane-bound metalloproteases. This cleavage is inhibited by phosphorylation at Ser-544. In terms of tissue distribution, detected in skin. In the cornea, it is detected in the epithelial basement membrane, the epithelial cells, and at a lower level in stromal cells (at protein level). Stratified squamous epithelia. Found in hemidesmosomes. Expressed in cornea, oral mucosa, esophagus, intestine, kidney collecting ducts, ureter, bladder, urethra and thymus but is absent in lung, blood vessels, skeletal muscle and nerves.

It localises to the cell junction. The protein localises to the hemidesmosome. Its subcellular location is the membrane. The protein resides in the secreted. It is found in the extracellular space. It localises to the extracellular matrix. The protein localises to the basement membrane. Its function is as follows. May play a role in the integrity of hemidesmosome and the attachment of basal keratinocytes to the underlying basement membrane. The 120 kDa linear IgA disease antigen is an anchoring filament component involved in dermal-epidermal cohesion. Is the target of linear IgA bullous dermatosis autoantibodies. This is Collagen alpha-1(XVII) chain (COL17A1) from Homo sapiens (Human).